Reading from the N-terminus, the 45-residue chain is Iota-conotoxin-like R11.12 (45 aa).

Disulfide bonds link Cys5–Cys19, Cys12–Cys22, Cys18–Cys27, and Cys21–Cys36. Residue Leu43 is modified to D-leucine. Arg45 is a propeptide (removed by a carboxypeptidase).

The protein belongs to the conotoxin I1 superfamily. Expressed by the venom duct.

The protein localises to the secreted. In terms of biological role, iota-conotoxins bind to voltage-gated sodium channels (Nav) and act as agonists by shifting the voltage-dependence of activation to more hyperpolarized levels. Produces general excitatory symptoms. The protein is Iota-conotoxin-like R11.12 of Conus radiatus (Rayed cone).